A 215-amino-acid chain; its full sequence is Cytochrome b6 (215 aa).

Residues 32-52 (IFYCLGGITFTSFLVQVATGF) traverse the membrane as a helical segment. A heme c-binding site is contributed by C35. Positions 86 and 100 each coordinate heme b. The next 3 membrane-spanning stretches (helical) occupy residues 90-110 (ASMM…TGGF), 116-136 (LTWV…VTGY), and 186-206 (LHTF…FLMI). Residues H187 and H202 each coordinate heme b.

This sequence belongs to the cytochrome b family. PetB subfamily. The 4 large subunits of the cytochrome b6-f complex are cytochrome b6, subunit IV (17 kDa polypeptide, PetD), cytochrome f and the Rieske protein, while the 4 small subunits are PetG, PetL, PetM and PetN. The complex functions as a dimer. It depends on heme b as a cofactor. The cofactor is heme c.

The protein localises to the plastid. Its subcellular location is the chloroplast thylakoid membrane. Its function is as follows. Component of the cytochrome b6-f complex, which mediates electron transfer between photosystem II (PSII) and photosystem I (PSI), cyclic electron flow around PSI, and state transitions. This chain is Cytochrome b6, found in Oltmannsiellopsis viridis (Marine flagellate).